Here is a 361-residue protein sequence, read N- to C-terminus: Molybdenum import ATP-binding protein ModC 1 (361 aa).

The region spanning 1-237 (MPADGIRARF…LDLPTAFHED (237 aa)) is the ABC transporter domain. ATP is bound at residue 35–42 (GHSGSGKT). Residues 296 to 361 (DSSITNVLPA…AQIKAVALLG (66 aa)) form the Mop domain.

The protein belongs to the ABC transporter superfamily. Molybdate importer (TC 3.A.1.8) family. The complex is composed of two ATP-binding proteins (ModC), two transmembrane proteins (ModB) and a solute-binding protein (ModA).

It localises to the cell inner membrane. It catalyses the reaction molybdate(out) + ATP + H2O = molybdate(in) + ADP + phosphate + H(+). Functionally, part of the ABC transporter complex ModABC involved in molybdenum import. Responsible for energy coupling to the transport system. The chain is Molybdenum import ATP-binding protein ModC 1 from Azotobacter vinelandii.